We begin with the raw amino-acid sequence, 219 residues long: RING-H2 finger protein ATL78 (219 aa).

A helical membrane pass occupies residues 57-77; that stretch reads VMVLSVLLCALVCSLGLNSII. An RING-type; atypical zinc finger spans residues 131–173; the sequence is CAICLSEFVAEERVKLLPTCHHGFHVRCIDKWLSSHSSCPTCR.

Belongs to the RING-type zinc finger family. ATL subfamily.

The protein resides in the membrane. The catalysed reaction is S-ubiquitinyl-[E2 ubiquitin-conjugating enzyme]-L-cysteine + [acceptor protein]-L-lysine = [E2 ubiquitin-conjugating enzyme]-L-cysteine + N(6)-ubiquitinyl-[acceptor protein]-L-lysine.. It participates in protein modification; protein ubiquitination. This Arabidopsis thaliana (Mouse-ear cress) protein is RING-H2 finger protein ATL78 (ATL78).